Consider the following 177-residue polypeptide: Inner membrane-spanning protein YciB (177 aa).

Transmembrane regions (helical) follow at residues 22-42 (IFIA…IHWI), 50-70 (ISLF…FFHN), 76-96 (WKIT…QFFT), 121-141 (FIWS…AYYF), and 149-169 (FKVF…SIYI).

The protein belongs to the YciB family.

The protein localises to the cell inner membrane. Plays a role in cell envelope biogenesis, maintenance of cell envelope integrity and membrane homeostasis. This chain is Inner membrane-spanning protein YciB, found in Buchnera aphidicola subsp. Acyrthosiphon pisum (strain 5A).